Here is a 360-residue protein sequence, read N- to C-terminus: DNA replication and repair protein RecF (360 aa).

30–37 (GNNGSGKT) is a binding site for ATP.

This sequence belongs to the RecF family.

It is found in the cytoplasm. Functionally, the RecF protein is involved in DNA metabolism; it is required for DNA replication and normal SOS inducibility. RecF binds preferentially to single-stranded, linear DNA. It also seems to bind ATP. This is DNA replication and repair protein RecF from Mannheimia succiniciproducens (strain KCTC 0769BP / MBEL55E).